A 482-amino-acid chain; its full sequence is ADP-ribosylation factor GTPase-activating protein effector protein 1 (482 aa).

The disordered stretch occupies residues 116-156; the sequence is QHKSTHSHHINHQTHPIHSSSSNSNSNNRIPTKTDSSKQHT. The segment covering 118–127 has biased composition (basic residues); it reads KSTHSHHINH. The span at 134-143 shows a compositional bias: low complexity; that stretch reads SSSSNSNSNN. An Arf-GAP domain is found at 170 to 297; it reads DELLSIVRKI…FVIDSNQGRE (128 aa). The C4-type zinc-finger motif lies at 186–210; the sequence is CCDCGSTATVEWVSINLLCILCIKC.

It is found in the cytoplasm. Its function is as follows. GTPase-activating protein (GAP) for the ADP ribosylation factors ARF1 and ARF2. May be involved in the endocytic pathway. The sequence is that of ADP-ribosylation factor GTPase-activating protein effector protein 1 (AGE1) from Saccharomyces cerevisiae (strain ATCC 204508 / S288c) (Baker's yeast).